The chain runs to 256 residues: 5-oxoprolinase subunit A (256 aa).

Belongs to the LamB/PxpA family. In terms of assembly, forms a complex composed of PxpA, PxpB and PxpC.

It catalyses the reaction 5-oxo-L-proline + ATP + 2 H2O = L-glutamate + ADP + phosphate + H(+). Catalyzes the cleavage of 5-oxoproline to form L-glutamate coupled to the hydrolysis of ATP to ADP and inorganic phosphate. The protein is 5-oxoprolinase subunit A of Geobacillus kaustophilus (strain HTA426).